The sequence spans 439 residues: Acetyl esterase Axe7A (439 aa).

The first 31 residues, 1–31 (MFNFAPKQTTEMKKLLFTLVFVLGSMATALA), serve as a signal peptide directing secretion. Ser-309 serves as the catalytic Nucleophile. Residues Asp-391 and His-420 each act as charge relay system in the active site.

It belongs to the carbohydrate esterase 7 family.

It functions in the pathway glycan degradation; xylan degradation. In terms of biological role, involved in degradation of plant cell wall polysaccharides. Has acetyl esterase activity towards a broad range of substrates including xylose-tetraacetate, 4-O-methylumbelliferyl acetate, glucose-pentaacetate, cephalosporin C, and acetylated xylo-oligosaccharides smaller than xylo-heptaose. Displays no detectable activity on polymeric acetylated xylan. This is Acetyl esterase Axe7A from Xylanibacter ruminicola (strain ATCC 19189 / DSM 19721 / CIP 105475 / JCM 8958 / 23) (Prevotella ruminicola).